The sequence spans 555 residues: Glucose-6-phosphate isomerase (555 aa).

Catalysis depends on glutamate 355, which acts as the Proton donor. Active-site residues include histidine 386 and lysine 514.

This sequence belongs to the GPI family.

It localises to the cytoplasm. The enzyme catalyses alpha-D-glucose 6-phosphate = beta-D-fructose 6-phosphate. Its pathway is carbohydrate biosynthesis; gluconeogenesis. The protein operates within carbohydrate degradation; glycolysis; D-glyceraldehyde 3-phosphate and glycerone phosphate from D-glucose: step 2/4. Its function is as follows. Catalyzes the reversible isomerization of glucose-6-phosphate to fructose-6-phosphate. The chain is Glucose-6-phosphate isomerase from Buchnera aphidicola subsp. Schizaphis graminum (strain Sg).